A 194-amino-acid polypeptide reads, in one-letter code: Molybdenum cofactor guanylyltransferase (194 aa).

Residues 12–14, lysine 25, asparagine 53, aspartate 71, and aspartate 101 contribute to the GTP site; that span reads LAG. Aspartate 101 contacts Mg(2+).

This sequence belongs to the MobA family. As to quaternary structure, monomer. It depends on Mg(2+) as a cofactor.

The protein resides in the cytoplasm. It carries out the reaction Mo-molybdopterin + GTP + H(+) = Mo-molybdopterin guanine dinucleotide + diphosphate. Transfers a GMP moiety from GTP to Mo-molybdopterin (Mo-MPT) cofactor (Moco or molybdenum cofactor) to form Mo-molybdopterin guanine dinucleotide (Mo-MGD) cofactor. This Escherichia coli O157:H7 protein is Molybdenum cofactor guanylyltransferase.